The following is a 124-amino-acid chain: Small ribosomal subunit protein uS12 (124 aa).

Positions 1 to 32 (MPTINQLVRKGRRDKTAKVKTAALKGSPQRRG) are disordered. Aspartate 89 is modified (3-methylthioaspartic acid). A disordered region spans residues 104-124 (TQGVKGRKQARSRYGAKKEKS). Positions 108–118 (KGRKQARSRYG) are enriched in basic residues.

It belongs to the universal ribosomal protein uS12 family. In terms of assembly, part of the 30S ribosomal subunit. Contacts proteins S8 and S17. May interact with IF1 in the 30S initiation complex.

With S4 and S5 plays an important role in translational accuracy. Functionally, interacts with and stabilizes bases of the 16S rRNA that are involved in tRNA selection in the A site and with the mRNA backbone. Located at the interface of the 30S and 50S subunits, it traverses the body of the 30S subunit contacting proteins on the other side and probably holding the rRNA structure together. The combined cluster of proteins S8, S12 and S17 appears to hold together the shoulder and platform of the 30S subunit. In Rhodococcus erythropolis (strain PR4 / NBRC 100887), this protein is Small ribosomal subunit protein uS12.